The chain runs to 298 residues: MQLVLRDIDQGPFLSKVLAKGQADDTLSGEQLAQIKSKAILMSLKLADKFYNKYKMHLLEQAAHDVIGVVSLGLMELSNQDQQQALRLLITADGVVKCFQKGWSMLSVVSKHKLVNSKSLYGDVDKFLLEQVSTPPDADEWLGYEAYQDALVEHQRQQSIAALMAQFYAQTSYDPLDFLNLESVLAEAVLYRMLFDNAKVRQDLKKRIAKISLQDEWFSLEYIEQQTQQALAELPAELADTIGKDLGKNFAPALLRTLHFAKSYRELLLNDASPERLERFEHKEGLVGLLGWPLYIVL.

In terms of assembly, interacts with the C-terminal extension of AtcJ. Also interacts with AtcB, but not with AtcA.

With respect to regulation, interaction with AtcJ stabilizes AtcC. Functionally, involved in cold adaptation. In Shewanella oneidensis (strain ATCC 700550 / JCM 31522 / CIP 106686 / LMG 19005 / NCIMB 14063 / MR-1), this protein is Adaptation to cold protein C.